The sequence spans 316 residues: Transaldolase (316 aa).

The active-site Schiff-base intermediate with substrate is the Lys-132.

The protein belongs to the transaldolase family. Type 1 subfamily. As to quaternary structure, homodimer.

The protein resides in the cytoplasm. The enzyme catalyses D-sedoheptulose 7-phosphate + D-glyceraldehyde 3-phosphate = D-erythrose 4-phosphate + beta-D-fructose 6-phosphate. It functions in the pathway carbohydrate degradation; pentose phosphate pathway; D-glyceraldehyde 3-phosphate and beta-D-fructose 6-phosphate from D-ribose 5-phosphate and D-xylulose 5-phosphate (non-oxidative stage): step 2/3. Functionally, transaldolase is important for the balance of metabolites in the pentose-phosphate pathway. This Vibrio vulnificus (strain CMCP6) protein is Transaldolase.